The sequence spans 219 residues: Vacuolar protein sorting-associated protein 32 homolog 2 (219 aa).

Coiled-coil stretches lie at residues 10-41 and 117-176; these read KQEA…KKAG and TNID…QLLQ. Positions 168-219 are disordered; it reads EELESQLLQPATTAPPLPSVPVPAGRQPARPVPQKRTAEEEELAALQAEMAL.

The protein belongs to the SNF7 family. As to quaternary structure, component of the endosomal sorting required for transport complex III (ESCRT-III), composed at least of VPS2, VPS20, VPS24 and VPS32. Interacts with SKD1. Interacts with BRO1/ALIX.

It localises to the endosome. Component of the ESCRT-III complex, which is required for multivesicular bodies (MVBs) formation and sorting of endosomal cargo proteins into MVBs. The ESCRT-III complex is probably involved in the concentration of MVB cargo. This chain is Vacuolar protein sorting-associated protein 32 homolog 2 (VPS32.2), found in Arabidopsis thaliana (Mouse-ear cress).